The primary structure comprises 340 residues: HTH-type transcriptional regulator GalS (340 aa).

In terms of domain architecture, HTH lacI-type spans 1–56 (MITIRDVARQAGVSVATVSRVLNNSALVSPDTRDAVMQAVTLLGYRPNANAQALAT). Positions 4-23 (IRDVARQAGVSVATVSRVLN) form a DNA-binding region, H-T-H motif.

Homodimer.

Its function is as follows. Repressor of the mgl operon. Binds galactose and D-fucose as inducers. GalS binds to an operator DNA sequence within its own coding sequence. The chain is HTH-type transcriptional regulator GalS (galS) from Salmonella typhimurium (strain LT2 / SGSC1412 / ATCC 700720).